Reading from the N-terminus, the 264-residue chain is Thymidylate synthase (264 aa).

A dUMP-binding site is contributed by arginine 21. Histidine 51 contributes to the (6R)-5,10-methylene-5,6,7,8-tetrahydrofolate binding site. 126–127 (RR) lines the dUMP pocket. The Nucleophile role is filled by cysteine 146. DUMP is bound by residues 166–169 (RSAD), asparagine 177, and 207–209 (HIY). (6R)-5,10-methylene-5,6,7,8-tetrahydrofolate is bound at residue aspartate 169. A (6R)-5,10-methylene-5,6,7,8-tetrahydrofolate-binding site is contributed by serine 263.

It belongs to the thymidylate synthase family. Bacterial-type ThyA subfamily. In terms of assembly, homodimer.

It is found in the cytoplasm. The enzyme catalyses dUMP + (6R)-5,10-methylene-5,6,7,8-tetrahydrofolate = 7,8-dihydrofolate + dTMP. It functions in the pathway pyrimidine metabolism; dTTP biosynthesis. Functionally, catalyzes the reductive methylation of 2'-deoxyuridine-5'-monophosphate (dUMP) to 2'-deoxythymidine-5'-monophosphate (dTMP) while utilizing 5,10-methylenetetrahydrofolate (mTHF) as the methyl donor and reductant in the reaction, yielding dihydrofolate (DHF) as a by-product. This enzymatic reaction provides an intracellular de novo source of dTMP, an essential precursor for DNA biosynthesis. This is Thymidylate synthase from Bacillus pumilus (strain SAFR-032).